Consider the following 257-residue polypeptide: Phosphate import ATP-binding protein PstB (257 aa).

An ABC transporter domain is found at 5–246 (LEIKDLTAFY…EVIFTSPKNE (242 aa)). Residue 37 to 44 (GPSGCGKS) participates in ATP binding.

The protein belongs to the ABC transporter superfamily. Phosphate importer (TC 3.A.1.7) family. The complex is composed of two ATP-binding proteins (PstB), two transmembrane proteins (PstC and PstA) and a solute-binding protein (PstS).

It localises to the cell membrane. It catalyses the reaction phosphate(out) + ATP + H2O = ADP + 2 phosphate(in) + H(+). In terms of biological role, part of the ABC transporter complex PstSACB involved in phosphate import. Responsible for energy coupling to the transport system. This chain is Phosphate import ATP-binding protein PstB, found in Tropheryma whipplei (strain TW08/27) (Whipple's bacillus).